A 117-amino-acid polypeptide reads, in one-letter code: UPF0102 protein Rsph17029_0461 (117 aa).

Belongs to the UPF0102 family.

The polypeptide is UPF0102 protein Rsph17029_0461 (Cereibacter sphaeroides (strain ATCC 17029 / ATH 2.4.9) (Rhodobacter sphaeroides)).